Consider the following 347-residue polypeptide: Elongation factor Ts (347 aa).

The interval 80–83 (TDFV) is involved in Mg(2+) ion dislocation from EF-Tu.

It belongs to the EF-Ts family.

It is found in the cytoplasm. Functionally, associates with the EF-Tu.GDP complex and induces the exchange of GDP to GTP. It remains bound to the aminoacyl-tRNA.EF-Tu.GTP complex up to the GTP hydrolysis stage on the ribosome. This Streptococcus gordonii (strain Challis / ATCC 35105 / BCRC 15272 / CH1 / DL1 / V288) protein is Elongation factor Ts.